A 379-amino-acid chain; its full sequence is Guanine nucleotide-binding protein G(s) subunit alpha (379 aa).

Positions 1-25 (MGCLGNSKTEDQRNEEKVQRETNKK) are disordered. Gly-2 carries N-palmitoyl glycine lipidation. Cys-3 carries the S-palmitoyl cysteine lipid modification. A compositionally biased stretch (basic and acidic residues) spans 8-25 (KTEDQRNEEKVQRETNKK). Positions 39-379 (ATHRLLLLGA…RMHLRQYELL (341 aa)) constitute a G-alpha domain. The tract at residues 42–55 (RLLLLGAGESGKSS) is G1 motif. Residues 47-55 (GAGESGKSS), 182-189 (LLRCRVLT), 208-212 (DVGGQ), 277-280 (NKQD), and Ala-351 contribute to the GTP site. Mg(2+)-binding residues include Ser-54 and Thr-189. The interval 181–189 (DLLRCRVLT) is G2 motif. Positions 204–213 (FHMFDVGGQR) are G3 motif. Residues 273–280 (ILFLNKQD) form a G4 motif region. A G5 motif region spans residues 349–354 (TCAVDT).

Belongs to the G-alpha family. G(s) subfamily. Heterotrimeric G proteins are composed of 3 units; alpha, beta and gamma. The alpha chain contains the guanine nucleotide binding site.

It localises to the cell membrane. Functionally, guanine nucleotide-binding proteins (G proteins) function as transducers in numerous signaling pathways controlled by G protein-coupled receptors (GPCRs). Signaling involves the activation of adenylyl cyclases, resulting in increased levels of the signaling molecule cAMP. GNAS functions downstream of several GPCRs, including beta-adrenergic receptors. Stimulates the Ras signaling pathway. The protein is Guanine nucleotide-binding protein G(s) subunit alpha (gnas) of Xenopus laevis (African clawed frog).